The chain runs to 371 residues: 2-aminoethylphosphonate--pyruvate transaminase (371 aa).

N6-(pyridoxal phosphate)lysine is present on K195.

This sequence belongs to the class-V pyridoxal-phosphate-dependent aminotransferase family. PhnW subfamily. In terms of assembly, homotetramer; however this is for an enzyme with a molecular weight of 16500, which is in disagreement with the weight of this protein. It depends on pyridoxal 5'-phosphate as a cofactor.

The enzyme catalyses (2-aminoethyl)phosphonate + pyruvate = phosphonoacetaldehyde + L-alanine. Its activity is regulated as follows. Inhibited by phosphonic acids and very slightly inhibited by aminophosphonic acids. In terms of biological role, involved in phosphonate degradation. The protein is 2-aminoethylphosphonate--pyruvate transaminase (phnW) of Pseudomonas aeruginosa (strain ATCC 15692 / DSM 22644 / CIP 104116 / JCM 14847 / LMG 12228 / 1C / PRS 101 / PAO1).